We begin with the raw amino-acid sequence, 386 residues long: MKFIDEARIEVMAGRGGNGVASFRREKFVPFGGPDGGDGGKGGSVYAVADENVNTLVEYRFVKKYLAQHGERGRGADCYGKGGDDIELKMPVGTVIHDADTGELVADLTHHGQRVMIAKGGKGGLGNIHFKSSTNRAPRQCTPGEQGEQRTLKLELKVLADVGLLGMPNAGKSTFIRSVSAARPKVADYPFTTLHPNLGVVRMDDTRSFVIADIPGLIEGAAEGAGLGHRFLKHLQRTGLLLHVVDIAPFDPDVDPVREARAIVEELKKFDEELHGKPRWLVLNKVDMLPEDERELTVSAFLNAYGWPQERPDDSLGFDIKAPRVFTISALNHEGTRELTFAIMSYLDVVRAQARKEAEALQQQAAAAKQKVIMPEAPAVSEGDDA.

The region spanning 1–159 (MKFIDEARIE…RTLKLELKVL (159 aa)) is the Obg domain. Positions 160-348 (ADVGLLGMPN…LTFAIMSYLD (189 aa)) constitute an OBG-type G domain. Residues 166-173 (GMPNAGKS), 191-195 (FTTLH), 213-216 (DIPG), 284-287 (NKVD), and 329-331 (SAL) contribute to the GTP site. 2 residues coordinate Mg(2+): Ser173 and Thr193.

Belongs to the TRAFAC class OBG-HflX-like GTPase superfamily. OBG GTPase family. Monomer. Mg(2+) is required as a cofactor.

The protein localises to the cytoplasm. An essential GTPase which binds GTP, GDP and possibly (p)ppGpp with moderate affinity, with high nucleotide exchange rates and a fairly low GTP hydrolysis rate. Plays a role in control of the cell cycle, stress response, ribosome biogenesis and in those bacteria that undergo differentiation, in morphogenesis control. The polypeptide is GTPase Obg (Chromobacterium violaceum (strain ATCC 12472 / DSM 30191 / JCM 1249 / CCUG 213 / NBRC 12614 / NCIMB 9131 / NCTC 9757 / MK)).